The primary structure comprises 277 residues: Large ribosomal subunit protein uL2 (277 aa).

The tract at residues 223–264 (VAMNPVDHPHGGGEGKTAAGRHPVSPWGTPSKGSRTRRNKRT) is disordered.

It belongs to the universal ribosomal protein uL2 family. In terms of assembly, part of the 50S ribosomal subunit. Forms a bridge to the 30S subunit in the 70S ribosome.

Its function is as follows. One of the primary rRNA binding proteins. Required for association of the 30S and 50S subunits to form the 70S ribosome, for tRNA binding and peptide bond formation. It has been suggested to have peptidyltransferase activity; this is somewhat controversial. Makes several contacts with the 16S rRNA in the 70S ribosome. The polypeptide is Large ribosomal subunit protein uL2 (Nitrosomonas eutropha (strain DSM 101675 / C91 / Nm57)).